The following is a 337-amino-acid chain: 2-oxoglutarate-dependent dioxygenase frbA (337 aa).

Residues 175–290 enclose the Fe2OG dioxygenase domain; that stretch reads CSAELRLNHY…RHSLAYFGKP (116 aa). The Fe cation site is built by histidine 202, aspartate 204, and histidine 262. Arginine 281 serves as a coordination point for 2-oxoglutarate.

The protein belongs to the iron/ascorbate-dependent oxidoreductase family. It depends on Fe(2+) as a cofactor.

The protein operates within antifungal biosynthesis. 2-oxoglutarate-dependent dioxygenase; part of the gene cluster that mediates the biosynthesis of the antifungal antibiotic FR901469, an inhibitor of beta-1,3-glucansynthase, exerting antifungal activity against the pathogenes Candida albicans and Aspergillus fumigatus. FR901469 is a cyclic depsipeptide containing 12 amino acid residues and a fatty acid chain. The NRPS frbI contains 12 modules responsible for the formation of the depsipeptide backbone which is denoted as Acyl-Thr-Ala-Tyr-Val-4OHPro-Thr-Thr-3OHPro-threo3OHGln-Gly-Thr-Orn-OH (C71H116N14O23). The PKS frbB is probably involved in the production of the hydrocarbon chain, and the acyl-CoA ligase frbC might be involved in the transport of the chain to the peptide ptoduct of frbI. Because FR901469 contains 3 hydroxylated amino acid residues, the 3 oxygenases frbA, frbH, and frbJ might be participating in amino acid hydroxylation. As no thioesterase domains were detected in frbI or frbB, the thioesterases frbD and frbE may instead release and cyclize the products of the NRPS and PKS, respectively. The polypeptide is 2-oxoglutarate-dependent dioxygenase frbA (Dothideomycetidae sp. (strain 11243) (Fungal sp. (strain No.11243))).